The chain runs to 361 residues: Ankyrin repeat domain-containing protein 16 (361 aa).

ANK repeat units follow at residues 36 to 66 (AGDT…DIEA), 70 to 99 (DYKR…VVDS), 103 to 132 (ADWT…NPLL), 136 to 165 (DGWN…DAWK), 170 to 200 (IRRT…EPDC), 204 to 233 (CGVT…ACSS), 238 to 268 (MGAQ…DVDV), 273 to 302 (SQLT…DINS), and 306 to 335 (RNRS…KDSE).

As to quaternary structure, interacts with AARS; the interaction is direct. As to expression, widely expressed in brain (at protein level).

It is found in the cytoplasm. The protein localises to the nucleus. In terms of biological role, required to prevent the misactivation of serine (Ser) with tRNA(Ala) by promoting the hydrolysis of Ser-mischarged tRNA(Ala), thereby playing a role in translational fidelity. Binds directly to the catalytic domain of AARS/AlaRS and captures Ser that is misactivated by AARS/AlaRS, preventing the charging of Ser adenylates to tRNA(Ala) and precluding Ser misincorporation in nascent peptides. This is Ankyrin repeat domain-containing protein 16 from Mus musculus (Mouse).